The chain runs to 271 residues: Low choriolytic enzyme (271 aa).

Residues 1-20 form the signal peptide; that stretch reads MDLLAKASVLLLLLLSLSNA. The propeptide at 21-71 is activation peptide; the sequence is QTDNMEEAENGSSKEEIDESELEDVSSIIFRMNNNSMEELLEGDLVLPKTR. 2 N-linked (GlcNAc...) asparagine glycosylation sites follow: N30 and N54. The Peptidase M12A domain maps to 72-271; sequence NAMKCFGAPD…ILRVNKLYKC (200 aa). 3 cysteine pairs are disulfide-bonded: C76-C83, C123-C271, and C144-C164. H172 serves as a coordination point for Zn(2+). The active site involves E173. Residues H176 and H182 each contribute to the Zn(2+) site. N-linked (GlcNAc...) asparagine glycosylation occurs at N211.

The cofactor is Zn(2+).

It localises to the zymogen granule. The catalysed reaction is Hydrolysis of the inner layer of fish egg envelope. Also hydrolysis of casein and small molecule substrates such as succinyl-Leu-Leu-Val-Tyr-|-7-(4-methyl)coumarylamide.. Its function is as follows. Participates in the breakdown of the egg envelope, which is derived from the egg extracellular matrix, at the time of hatching. Thus allowing the newly hatched fish to swim free. LCE solubilizes the egg envelope only after it has been swollen by the action of HCE. The polypeptide is Low choriolytic enzyme (lce) (Oryzias latipes (Japanese rice fish)).